A 71-amino-acid polypeptide reads, in one-letter code: Large ribosomal subunit protein bL31 (71 aa).

Zn(2+)-binding residues include Cys16, Cys18, Cys38, and Cys41.

It belongs to the bacterial ribosomal protein bL31 family. Type A subfamily. Part of the 50S ribosomal subunit. The cofactor is Zn(2+).

Binds the 23S rRNA. This Neisseria gonorrhoeae (strain ATCC 700825 / FA 1090) protein is Large ribosomal subunit protein bL31.